A 533-amino-acid chain; its full sequence is Death domain-containing ATP nucleosidase (533 aa).

The segment at 1-262 (MDAAAIISLL…TAAGKEEKVS (262 aa)) is death domain. The disordered stretch occupies residues 184–248 (STFVSDDATQ…TQTSTNSFNS (65 aa)). The span at 218–227 (PSAQVNQPPT) shows a compositional bias: polar residues. The segment covering 236-248 (SGSTQTSTNSFNS) has biased composition (low complexity). The segment at 263 to 533 (DDVTKGIKFL…HLDDDRTIHM (271 aa)) is purine nucleoside phosphorylase domain.

It carries out the reaction ATP + H2O = D-ribose 5-triphosphate + adenine. The catalysed reaction is dATP + H2O = 2-deoxyribose 5-triphosphate + adenine. Functionally, the C-terminal purine nucleoside phosphorylase (PNP) domain cleaves the N-glycosidic bond of ATP, and to a lesser extent dATP, to release adenine and a sugar triphosphate; has weak activity on ADP and AMP and no activity on dADP, dAMP, adenosine, deoxyadenosine or other (d)NTPs. The chain is Death domain-containing ATP nucleosidase (109585858) from Amphimedon queenslandica (Sponge).